We begin with the raw amino-acid sequence, 87 residues long: MHGPHPTVKDIELSLAPEDVPVQCNVQLDEEDYTNVEEPAQQAYRVVTLCPKCSSPLRLVVECSHADIRALEQLLLGTLTVVCPRCV.

The E7 terminal domain stretch occupies residues 1–38 (MHGPHPTVKDIELSLAPEDVPVQCNVQLDEEDYTNVEE). The segment at 50–86 (CPKCSSPLRLVVECSHADIRALEQLLLGTLTVVCPRC) is a zinc-finger region. The Nuclear export signal motif lies at 68–76 (IRALEQLLL).

It belongs to the papillomaviridae E7 protein family. As to quaternary structure, homodimer. Homooligomer. Interacts with host RB1; this interaction induces dissociation of RB1-E2F1 complex thereby disrupting RB1 activity. Interacts with host EP300; this interaction represses EP300 transcriptional activity. Interacts with protein E2; this interaction inhibits E7 oncogenic activity. Interacts with host TMEM173/STING; this interaction impairs the ability of TMEM173/STING to sense cytosolic DNA and promote the production of type I interferon (IFN-alpha and IFN-beta). Highly phosphorylated.

It localises to the host cytoplasm. The protein localises to the host nucleus. Its function is as follows. Plays a role in viral genome replication by driving entry of quiescent cells into the cell cycle. Stimulation of progression from G1 to S phase allows the virus to efficiently use the cellular DNA replicating machinery to achieve viral genome replication. E7 protein has both transforming and trans-activating activities. Induces the disassembly of the E2F1 transcription factor from RB1, with subsequent transcriptional activation of E2F1-regulated S-phase genes. Interferes with host histone deacetylation mediated by HDAC1 and HDAC2, leading to transcription activation. Also plays a role in the inhibition of both antiviral and antiproliferative functions of host interferon alpha. Interaction with host TMEM173/STING impairs the ability of TMEM173/STING to sense cytosolic DNA and promote the production of type I interferon (IFN-alpha and IFN-beta). This chain is Protein E7, found in Human papillomavirus 28.